The sequence spans 238 residues: Splicing regulator RBM11 (238 aa).

The RRM domain maps to 10–87 (RTVFVGNLEA…RPINVQYRFG (78 aa)). A disordered region spans residues 172–238 (ALNHSPGPEA…CRKCKKKKRY (67 aa)). The Bipartite nuclear localization signal motif lies at 202–237 (NKRKRQRPDSDSDSSSEDKRGNEGSQKCRKCKKKKR). The segment covering 228–238 (KCRKCKKKKRY) has biased composition (basic residues).

As to quaternary structure, homodimer. As to expression, selectively expressed in brain, cerebellum and testis, and to a lower extent in kidney.

It localises to the nucleus. The protein resides in the nucleoplasm. The protein localises to the nucleus speckle. Functionally, tissue-specific splicing factor with potential implication in the regulation of alternative splicing during neuron and germ cell differentiation. Antagonizes SRSF1-mediated BCL-X splicing. May affect the choice of alternative 5' splice sites by binding to specific sequences in exons and antagonizing the SR protein SRSF1. The protein is Splicing regulator RBM11 (Rbm11) of Mus musculus (Mouse).